The primary structure comprises 962 residues: AP2-associated protein kinase 1 (962 aa).

Methionine 1 bears the N-acetylmethionine mark. Residues 1–11 (MKKFFDSRREQ) are compositionally biased toward basic and acidic residues. The interval 1-27 (MKKFFDSRREQGSSGLGSGSSGGGGSS) is disordered. The residue at position 14 (serine 14) is a Phosphoserine. Gly residues predominate over residues 14 to 27 (SGLGSGSSGGGGSS). Residues 46–314 (VTVDEVLAEG…QVSYFSFKLL (269 aa)) form the Protein kinase domain. ATP is bound by residues 52–60 (LAEGGFALV) and lysine 74. The active-site Proton acceptor is the aspartate 176. Position 234 is a phosphotyrosine (tyrosine 234). Serine 235 carries the post-translational modification Phosphoserine. 2 disordered regions span residues 325–515 (NSPI…QFQA) and 576–633 (PQAQ…RAGH). Phosphothreonine is present on residues threonine 353 and threonine 388. Omega-N-methylarginine is present on arginine 390. Positions 397 to 418 (PLPQATGPSNQPSLLASVSQPK) are enriched in polar residues. The span at 419-434 (AQATPSQPLQSSQPKQ) shows a compositional bias: low complexity. Over residues 435-444 (PQAPPTPQQT) the composition is skewed to pro residues. Threonine 440 is modified (phosphothreonine). Composition is skewed to low complexity over residues 445–485 (PAPQ…QPQQ), 498–514 (QQQQ…QQFQ), and 576–606 (PQAQ…KVQT). Threonine 607 carries the post-translational modification Phosphothreonine. A compositionally biased stretch (polar residues) spans 614-628 (GQKVGSLTPPSSPKT). Residue serine 619 is modified to Phosphoserine. Position 621 is a phosphothreonine (threonine 621). Serine 624, serine 625, serine 638, and serine 651 each carry phosphoserine. Position 654 is a phosphothreonine (threonine 654). A compositionally biased stretch (low complexity) spans 664–677 (ASLSKSKSATTTPS). Positions 664-702 (ASLSKSKSATTTPSGSPRTSQQNVSNASEGSTWNPFDDD) are disordered. Residues 678–697 (GSPRTSQQNVSNASEGSTWN) show a composition bias toward polar residues. 4 positions are modified to phosphoserine: serine 732, serine 847, serine 938, and serine 939. Residues 824–961 (EKADAAVESL…SLLLVDQLID (138 aa)) form a clathrin-binding domain (CBD) region. Disordered regions lie at residues 839-860 (PPVA…TDSL) and 925-946 (LITK…ESSL). Residues 846–860 (PSHTESVTSNRTDSL) are compositionally biased toward polar residues. Residues 932–945 (GGHSRNSSGSSESS) are compositionally biased toward low complexity.

This sequence belongs to the protein kinase superfamily. Ser/Thr protein kinase family. Interacts (via CBD domain) with clathrin. Interacts with AP-2 complex. Interacts with NUMB. Interacts with alpha-adaptin. Interacts with EPS15. Interacts with membrane-bound activated NOTCH1 but not with the inactive full-length form of NOTCH1. Preferentially interacts with monoubiquitinated activated NOTCH1 compared to the non-ubiquitinated form. Post-translationally, autophosphorylated.

The protein localises to the cell membrane. The protein resides in the membrane. Its subcellular location is the clathrin-coated pit. It localises to the presynapse. It catalyses the reaction L-seryl-[protein] + ATP = O-phospho-L-seryl-[protein] + ADP + H(+). The catalysed reaction is L-threonyl-[protein] + ATP = O-phospho-L-threonyl-[protein] + ADP + H(+). Its activity is regulated as follows. Stimulated by clathrin. Its function is as follows. Regulates clathrin-mediated endocytosis by phosphorylating the AP2M1/mu2 subunit of the adaptor protein complex 2 (AP-2) which ensures high affinity binding of AP-2 to cargo membrane proteins during the initial stages of endocytosis. Preferentially, may phosphorylate substrates on threonine residues. Regulates phosphorylation of other AP-2 subunits as well as AP-2 localization and AP-2-mediated internalization of ligand complexes. Phosphorylates NUMB and regulates its cellular localization, promoting NUMB localization to endosomes. Binds to and stabilizes the activated form of NOTCH1, increases its localization in endosomes and regulates its transcriptional activity. This chain is AP2-associated protein kinase 1 (Aak1), found in Rattus norvegicus (Rat).